We begin with the raw amino-acid sequence, 98 residues long: Integration host factor subunit alpha (98 aa).

Positions 51-71 (NFDLRDKNERPGRNPKTGEDI) are disordered. Positions 53 to 69 (DLRDKNERPGRNPKTGE) are enriched in basic and acidic residues.

The protein belongs to the bacterial histone-like protein family. In terms of assembly, heterodimer of an alpha and a beta chain.

Its function is as follows. This protein is one of the two subunits of integration host factor, a specific DNA-binding protein that functions in genetic recombination as well as in transcriptional and translational control. The polypeptide is Integration host factor subunit alpha (Vibrio campbellii (strain ATCC BAA-1116)).